A 1024-amino-acid chain; its full sequence is Myosin phosphatase Rho-interacting protein (1024 aa).

The interaction with F-actin stretch occupies residues M1–T382. The 108-residue stretch at K43 to R150 folds into the PH 1 domain. Positions N152–V262 are disordered. Residues S179–S190 show a composition bias toward low complexity. Phosphoserine is present on residues S193, S219, S221, S225, and S227. The span at S221 to A233 shows a compositional bias: low complexity. The span at P240–V262 shows a compositional bias: basic and acidic residues. Phosphoserine occurs at positions 266, 270, 289, and 292. Disordered regions lie at residues A274–S301 and P328–S379. Phosphothreonine is present on T295. Basic and acidic residues predominate over residues R333 to A349. The residue at position 364 (S364) is a Phosphoserine. The region spanning L386 to L482 is the PH 2 domain. The disordered stretch occupies residues A486–R583. Residues D488–R508 are compositionally biased toward polar residues. S492 bears the Phosphoserine mark. Positions P522–E545 are enriched in basic and acidic residues. An interaction with RHOA region spans residues E545–S823. A Phosphoserine modification is found at S617. Position 645 is a phosphothreonine (T645). Positions H672–S976 form a coiled coil. S799 is modified (phosphoserine). The tract at residues S823–L878 is interaction with PPP1R12A. The disordered stretch occupies residues L972–D995. S976, G979, S992, S1013, and S1015 each carry phosphoserine.

As to quaternary structure, binds RHOA, PPP1R12A/MBS and PPP1R12C/MBS85 through adjacent coiled coil domains. Interacts with MYZAP. Binds F-actin through its N-terminus. Expressed in Kidney, Brain, Heart and Lung.

It localises to the cytoplasm. The protein localises to the cytoskeleton. Its function is as follows. Targets myosin phosphatase to the actin cytoskeleton. Required for the regulation of the actin cytoskeleton by RhoA and ROCK1. Depletion leads to an increased number of stress fibers in smooth muscle cells through stabilization of actin fibers by phosphorylated myosin. Overexpression of MRIP as well as its F-actin-binding region leads to disassembly of stress fibers in neuronal cells. This Mus musculus (Mouse) protein is Myosin phosphatase Rho-interacting protein (Mprip).